Here is a 287-residue protein sequence, read N- to C-terminus: Lys-63-specific deubiquitinase (287 aa).

Residues 33-176 form the MPN domain; the sequence is VHLESDAFLV…YTCFQSVQAQ (144 aa). Residues H119, H121, and D132 each contribute to the Zn(2+) site. A JAMM motif motif is present at residues 119–132; that stretch reads HSHPHITVWPSHVD. Residues 256–283 adopt a coiled-coil conformation; the sequence is LQWLEDRLEQNKQSIITLQKEKELLTQE.

The protein belongs to the peptidase M67A family. BRCC36 subfamily. Monomer. Homodimer. Component of the BRISC complex, at least composed of abraxas2, brcc3, babam1 and babam2. Interacts with abraxas2; the interaction is direct and may form a heterotetramer. Component of the BRCA1-A complex. Both the BRCA1-A complex and the BRISC complex bind polyubiquitin. The cofactor is Zn(2+).

The protein localises to the nucleus. Its subcellular location is the cytoplasm. It is found in the cytoskeleton. It localises to the spindle pole. In terms of biological role, metalloprotease that specifically cleaves 'Lys-63'-linked polyubiquitin chains, leaving the last ubiquitin chain attached to its substrates. Catalytic subunit of the BRISC complex, a multiprotein complex that specifically cleaves 'Lys-63'-linked ubiquitin in various substrates; brcc3 does not have activity by itself, but needs to be associated into a higher-order assembly, for minimal in vitro activity. The polypeptide is Lys-63-specific deubiquitinase (Danio rerio (Zebrafish)).